A 323-amino-acid polypeptide reads, in one-letter code: Methionyl-tRNA formyltransferase (323 aa).

118–121 (SLLP) provides a ligand contact to (6S)-5,6,7,8-tetrahydrofolate.

The protein belongs to the Fmt family.

It catalyses the reaction L-methionyl-tRNA(fMet) + (6R)-10-formyltetrahydrofolate = N-formyl-L-methionyl-tRNA(fMet) + (6S)-5,6,7,8-tetrahydrofolate + H(+). Attaches a formyl group to the free amino group of methionyl-tRNA(fMet). The formyl group appears to play a dual role in the initiator identity of N-formylmethionyl-tRNA by promoting its recognition by IF2 and preventing the misappropriation of this tRNA by the elongation apparatus. The protein is Methionyl-tRNA formyltransferase of Buchnera aphidicola subsp. Baizongia pistaciae (strain Bp).